A 270-amino-acid polypeptide reads, in one-letter code: Protein ABHD14A (270 aa).

Residues 9–29 (LVVLGLVLLATVLLYLLLPSM) traverse the membrane as a helical; Signal-anchor for type II membrane protein segment. An N-linked (GlcNAc...) asparagine glycan is attached at N61. Catalysis depends on charge relay system residues S170 and D221. The N-linked (GlcNAc...) asparagine glycan is linked to N237. H248 (charge relay system) is an active-site residue.

The protein belongs to the AB hydrolase superfamily. ABHD14 family.

The protein localises to the cytoplasm. It localises to the membrane. Functionally, possible role in granule neuron development. This Danio rerio (Zebrafish) protein is Protein ABHD14A.